Reading from the N-terminus, the 2568-residue chain is Highly reducing polyketide synthase AN6791 (2568 aa).

The Ketosynthase family 3 (KS3) domain maps to 11–445 (AEPIAIVGLS…GTNAHLIVES (435 aa)). Active-site for beta-ketoacyl synthase activity residues include Cys-200, His-326, and His-366. The Malonyl-CoA:ACP transacylase (MAT) domain maps to 558 to 882 (VFTGQGAQWY…GSLVREVSAV (325 aa)). The interval 949–1087 (HDLLGSLVLG…GLITMEPEDA (139 aa)) is N-terminal hotdog fold. In terms of domain architecture, PKS/mFAS DH spans 949–1258 (HDLLGSLVLG…FQSVGRSAAP (310 aa)). His-981 acts as the Proton acceptor; for dehydratase activity in catalysis. Residues 1104–1258 (TRRFGPSDLY…FQSVGRSAAP (155 aa)) form a C-terminal hotdog fold region. Asp-1169 functions as the Proton donor; for dehydratase activity in the catalytic mechanism. The tract at residues 1311–1620 (RACLYFIYDA…EVRDCESDEW (310 aa)) is methyltransferase (CMet) domain. Residues 1857–2174 (GLLDTIAFDD…VGKHSGKVVL (318 aa)) enclose the Enoyl reductase (ER) domain. The region spanning 2197–2375 (ASYLLVGGAG…AVSMDLGPVK (179 aa)) is the Ketoreductase (KR) domain. The Carrier domain occupies 2481–2558 (QAEKLVVEAI…ALASEVTRKS (78 aa)). Ser-2518 carries the O-(pantetheine 4'-phosphoryl)serine modification.

Pantetheine 4'-phosphate serves as cofactor.

It participates in secondary metabolite biosynthesis. Its function is as follows. Highly reducing polyketide synthase; part of a cluster that mediates the biosynthesis of a yet undetermined secondary metabolite. With esterase AN6793, produces a pathway intermediate compound with molecular weight 258. The polypeptide is Highly reducing polyketide synthase AN6791 (Emericella nidulans (strain FGSC A4 / ATCC 38163 / CBS 112.46 / NRRL 194 / M139) (Aspergillus nidulans)).